Reading from the N-terminus, the 203-residue chain is Type III effector protein HopBF1 (203 aa).

A disordered region spans residues 1–23 (MFNVSNNVAPSRYQGPSSTSVTP). ATP is bound by residues S40, Q41, K42, D107, I109, and D114. D155 is an active-site residue. Q157 contributes to the ATP binding site.

It belongs to the HopBF1 family.

The protein resides in the secreted. Its subcellular location is the host cell. The catalysed reaction is L-seryl-[protein] + ATP = O-phospho-L-seryl-[protein] + ADP + H(+). Functionally, effector protein that targets and inactivates the eukaryotic molecular chaperone HSP90 during infection. HopBF1 is recognized by HSP90 as a host client. As a result, HopBF1 phosphorylates HSP90, leading to the inactivation of the HSP90 ATPase activity and chaperone function. In vitro, can phosphorylate the recombinant yeast HSP82 (HSP90) and human HSP 90-beta on Ser-108. This Ewingella americana (strain ATCC 33852 / DSM 4580 / CCUG 14506 / JCM 5911 / LMG 7869 / NCTC 12157 / CDC 1468-78) protein is Type III effector protein HopBF1.